Here is a 106-residue protein sequence, read N- to C-terminus: FSQQTIPPSAKYGGILTVTMSPGDGDGPELMLTVXXXXXSACVPVDFEEVVVSSNADEEDIRTSLDLYANVIHCKLGDGLFLQCCKNIANPTATLLASCMMLDHLK.

Belongs to the isocitrate and isopropylmalate dehydrogenases family. In terms of assembly, heterooligomer of subunits alpha (IDH3A), beta (IDH3B), and gamma (IDH3G) in the apparent ratio of 2:1:1. The heterodimer containing one IDH3A and one IDH3B subunit and the heterodimer containing one IDH3A and one IDH3G subunit assemble into a heterotetramer (which contains two subunits of IDH3A, one of IDH3B and one of IDH3G) and further into the heterooctamer.

Its subcellular location is the mitochondrion. Its activity is regulated as follows. The heterotetramer and the heterodimer composed of IDH3A and IDH3G subunits can be allosterically activated by citrate (CIT) or/and ADP, and the two activators can act independently or synergistically. The heterodimer composed of IDH3A and IDH3B subunits cannot be allosterically regulated and the allosteric regulation of the heterotetramer is through the IDH3G subunit and not the IDH3B subunit. The IDH3G subunit contains the allosteric site which consists of a CIT-binding site and an ADP-binding site, and the binding of CIT and ADP causes conformational changes at the allosteric site which are transmitted to the active site in the catalytic subunit (IDH3A) through a cascade of conformational changes at the heterodimer interface, leading to stabilization of the isocitrate-binding at the active site and thus activation of the enzyme. ATP can activate the heterotetramer and the heterodimer composed of IDH3A and IDH3G subunits at low concentrations but inhibits their activities at high concentrations, whereas ATP exhibits only inhibitory effect on the heterodimer composed of IDH3A and IDH3B subunits. Its function is as follows. Regulatory subunit which plays a role in the allosteric regulation of the enzyme catalyzing the decarboxylation of isocitrate (ICT) into alpha-ketoglutarate. The heterodimer composed of the alpha (IDH3A) and beta (IDH3B) subunits and the heterodimer composed of the alpha (IDH3A) and gamma (IDH3G) subunits, have considerable basal activity but the full activity of the heterotetramer (containing two subunits of IDH3A, one of IDH3B and one of IDH3G) requires the assembly and cooperative function of both heterodimers. The sequence is that of Isocitrate dehydrogenase [NAD] subunit gamma, mitochondrial (IDH3G) from Sus scrofa (Pig).